A 148-amino-acid chain; its full sequence is MKVIFTQDVKGKGKKGEVKEVPVGYANNFLLKKNYAVEATPGNLKQLELQKKRAKQERQQEIEDAKALKETLSNIEVEVSAKTGEGGKLFGSVSTKQIAEALKAQHDIKIDKRKMDLPNGIHSLGYTNVPVKLDKEVEGTIRVHTVEQ.

This sequence belongs to the bacterial ribosomal protein bL9 family.

Its function is as follows. Binds to the 23S rRNA. The polypeptide is Large ribosomal subunit protein bL9 (Staphylococcus aureus (strain Newman)).